The chain runs to 738 residues: Wall-associated receptor kinase 4 (738 aa).

An N-terminal signal peptide occupies residues 1-22 (MKVQRLFLVAIFCLSYMQLVKG). At 23–335 (QTLPRCPEKC…PKGNPEYVEW (313 aa)) the chain is on the extracellular side. N34, N56, N109, N115, N132, N182, and N208 each carry an N-linked (GlcNAc...) asparagine glycan. The 47-residue stretch at 232–278 (RGETCGQVGEKKCGVNGICSNSASGIGYTCKCKGGFQGNPYLQNGCQ) folds into the EGF-like 1 domain. Intrachain disulfides connect C236-C250, C244-C261, C263-C277, C283-C300, C294-C309, and C311-C324. Positions 279-325 (DINECTTANPIHKHNCSGDSTCENKLGHFRCNCRSRYELNTTTNTCK) constitute an EGF-like 2; calcium-binding domain. The N-linked (GlcNAc...) asparagine glycan is linked to N293. N-linked (GlcNAc...) asparagine glycosylation is present at N318. Residues 336–356 (TTIVLGTTIGFLVILLAISCI) form a helical membrane-spanning segment. The Cytoplasmic portion of the chain corresponds to 357 to 738 (EHKMKNTKDT…VAILDIEAGR (382 aa)). Position 399 is a phosphothreonine (T399). The 284-residue stretch at 410–693 (YDENRILGQG…RVTKTKHKWS (284 aa)) folds into the Protein kinase domain. ATP is bound by residues 416-424 (LGQGGQGTV) and K438. At Y483 the chain carries Phosphotyrosine. The active-site Proton acceptor is the D535. 2 positions are modified to phosphothreonine: T569 and T574. Phosphotyrosine is present on Y582.

It belongs to the protein kinase superfamily. Ser/Thr protein kinase family. As to expression, strictly expressed in siliques.

The protein resides in the membrane. The enzyme catalyses L-seryl-[protein] + ATP = O-phospho-L-seryl-[protein] + ADP + H(+). It catalyses the reaction L-threonyl-[protein] + ATP = O-phospho-L-threonyl-[protein] + ADP + H(+). Functionally, serine/threonine-protein kinase that may function as a signaling receptor of extracellular matrix component. Binding to pectin may have significance in the control of cell expansion, morphogenesis and development. The protein is Wall-associated receptor kinase 4 (WAK4) of Arabidopsis thaliana (Mouse-ear cress).